The sequence spans 687 residues: DNA ligase (687 aa).

Residues 34–38 (DAEYD), 83–84 (SL), and E117 contribute to the NAD(+) site. The active-site N6-AMP-lysine intermediate is K119. Positions 140, 182, 298, and 322 each coordinate NAD(+). Positions 416, 419, 434, and 439 each coordinate Zn(2+). A BRCT domain is found at 609-687 (EARGPFAGKT…EEEFVRLLKE (79 aa)).

Belongs to the NAD-dependent DNA ligase family. LigA subfamily. Requires Mg(2+) as cofactor. Mn(2+) is required as a cofactor.

It catalyses the reaction NAD(+) + (deoxyribonucleotide)n-3'-hydroxyl + 5'-phospho-(deoxyribonucleotide)m = (deoxyribonucleotide)n+m + AMP + beta-nicotinamide D-nucleotide.. DNA ligase that catalyzes the formation of phosphodiester linkages between 5'-phosphoryl and 3'-hydroxyl groups in double-stranded DNA using NAD as a coenzyme and as the energy source for the reaction. It is essential for DNA replication and repair of damaged DNA. This is DNA ligase from Anaeromyxobacter sp. (strain K).